Reading from the N-terminus, the 218-residue chain is Small ribosomal subunit protein uS3c (218 aa).

Residues 47 to 118 enclose the KH type-2 domain; it reads VQKNMKTSSG…KLNIAITRIE (72 aa).

It belongs to the universal ribosomal protein uS3 family. As to quaternary structure, part of the 30S ribosomal subunit.

Its subcellular location is the plastid. The protein localises to the chloroplast. The protein is Small ribosomal subunit protein uS3c (rps3) of Lactuca sativa (Garden lettuce).